Here is a 214-residue protein sequence, read N- to C-terminus: Probable nicotinate-nucleotide adenylyltransferase (214 aa).

This sequence belongs to the NadD family.

The enzyme catalyses nicotinate beta-D-ribonucleotide + ATP + H(+) = deamido-NAD(+) + diphosphate. It functions in the pathway cofactor biosynthesis; NAD(+) biosynthesis; deamido-NAD(+) from nicotinate D-ribonucleotide: step 1/1. Functionally, catalyzes the reversible adenylation of nicotinate mononucleotide (NaMN) to nicotinic acid adenine dinucleotide (NaAD). The sequence is that of Probable nicotinate-nucleotide adenylyltransferase from Rubrobacter xylanophilus (strain DSM 9941 / JCM 11954 / NBRC 16129 / PRD-1).